Reading from the N-terminus, the 765-residue chain is Endothelin-converting enzyme 2 (765 aa).

At 1–60 (MSVALQELGGGGNMVEYKRATLRDEDAPETPVEGGASPDAVEAGFRKRTSRLLGLHTQLE) the chain is on the cytoplasmic side. Residues 61 to 81 (LVLAGVSLLLAALLLGCLVAL) form a helical; Signal-anchor for type II membrane protein membrane-spanning segment. Residues 82–765 (GVQYHRDPSH…MNSGQLCEVW (684 aa)) are Lumenal-facing. The Peptidase M13 domain maps to 93–765 (TCLTEACIRV…MNSGQLCEVW (673 aa)). 5 disulfides stabilise this stretch: cysteine 94–cysteine 99, cysteine 117–cysteine 750, cysteine 125–cysteine 710, cysteine 181–cysteine 430, and cysteine 639–cysteine 762. 7 N-linked (GlcNAc...) asparagine glycosylation sites follow: asparagine 161, asparagine 165, asparagine 206, asparagine 266, asparagine 311, asparagine 378, and asparagine 534. A Zn(2+)-binding site is contributed by histidine 602. The active site involves glutamate 603. A Zn(2+)-binding site is contributed by histidine 606. N-linked (GlcNAc...) asparagine glycans are attached at residues asparagine 627 and asparagine 635. Glutamate 662 is a Zn(2+) binding site. Aspartate 666 (proton donor) is an active-site residue.

The protein belongs to the peptidase M13 family. It depends on Zn(2+) as a cofactor. In terms of tissue distribution, isoform ECE2-1 and isoform ECE2-2 are expressed in brain and adrenal gland.

The protein localises to the golgi apparatus membrane. The protein resides in the cytoplasmic vesicle. It localises to the secretory vesicle membrane. It carries out the reaction Hydrolysis of the 21-Trp-|-Val-22 bond in big endothelin to form endothelin 1.. Its function is as follows. Converts big endothelin-1 to endothelin-1. Also involved in the processing of various neuroendocrine peptides, including neurotensin, angiotensin I, substance P, proenkephalin-derived peptides, and prodynorphin-derived peptides. May play a role in amyloid-beta processing. This Bos taurus (Bovine) protein is Endothelin-converting enzyme 2.